Here is a 348-residue protein sequence, read N- to C-terminus: Succinylglutamate desuccinylase (348 aa).

3 residues coordinate Zn(2+): His-67, Glu-70, and His-164. Glu-228 is an active-site residue.

The protein belongs to the AspA/AstE family. Succinylglutamate desuccinylase subfamily. Zn(2+) serves as cofactor.

It catalyses the reaction N-succinyl-L-glutamate + H2O = L-glutamate + succinate. It functions in the pathway amino-acid degradation; L-arginine degradation via AST pathway; L-glutamate and succinate from L-arginine: step 5/5. In terms of biological role, transforms N(2)-succinylglutamate into succinate and glutamate. This is Succinylglutamate desuccinylase from Shewanella denitrificans (strain OS217 / ATCC BAA-1090 / DSM 15013).